We begin with the raw amino-acid sequence, 251 residues long: Derlin-1 (251 aa).

Ser-2 carries the N-acetylserine modification. Residues 2–15 (SDIGDWFRSIPAIT) lie on the Cytoplasmic side of the membrane. The chain crosses the membrane as a helical span at residues 16–31 (RYWFAATVAVPLVGKL). Over 32–69 (GLISPAYLFLWPEAFLYRFQIWRPITATFYFPVGPGTG) the chain is Lumenal. Residues 70–89 (FLYLVNLYFLYHYSTRLETG) traverse the membrane as a helical segment. Topologically, residues 90 to 94 (AFDGR) are cytoplasmic. Residues 95-115 (PADYLFMLLFNWICIVITGLA) form a helical membrane-spanning segment. The Lumenal portion of the chain corresponds to 116-122 (MDMQLLM). Residues 123–137 (IPLIMSVLYVWAQLN) form a helical membrane-spanning segment. At 138-154 (RDMIVSFWFGTRFKACY) the chain is on the cytoplasmic side. Residues 155–166 (LPWVILGFNYII) form a helical membrane-spanning segment. The Lumenal segment spans residues 167–170 (GGSV). Residues 171–189 (INELIGNLVGHLYFFLMFR) form a helical membrane-spanning segment. Topologically, residues 190-251 (YPMDLGGRNF…WGQGFRLGDQ (62 aa)) are cytoplasmic. Ser-201 carries the post-translational modification Phosphoserine. Thr-202 carries the phosphothreonine modification. The residue at position 226 (Ser-226) is a Phosphoserine. Residues 229–251 (RAADQNGGGGRHNWGQGFRLGDQ) form a disordered region. The SHP-box motif lies at 241–248 (NWGQGFRL).

This sequence belongs to the derlin family. As to quaternary structure, homotetramer. The four subunits of the tetramer are arranged in a twofold symmetry. Forms homo- and heterooligomers with DERL2 and DERL3; binding to DERL3 is poorer than that between DERL2 and DERL3. Interacts (via SHP-box motif) with VCP. Interacts with AMFR, SELENOS, SEL1L, SELENOK and SYVN1, as well as with SEL1L-SYVN1 and VCP-SELENOS protein complexes; this interaction is weaker than that observed between DERL2 and these complexes. Interacts with NGLY1 and YOD1. Does not bind to EDEM1. Interacts with DNAJB9. Interacts with RNF103. Interacts with HM13. Interacts with XBP1 isoform 1 (via luminal/ectodomain domain); the interaction obviates the need for ectodomain shedding prior HM13/SPP-mediated XBP1 isoform 1 cleavage. Interacts with the signal recognition particle/SRP and the SRP receptor; in the process of endoplasmic reticulum stress-induced pre-emptive quality control. May interact with UBXN6. Interacts with ZFAND2B; probably through VCP. Interacts with CCDC47. Interacts with C18orf32. May interact with TRAM1. Forms a complex with SVIP and VCP/p97.

The protein localises to the endoplasmic reticulum membrane. Functional component of endoplasmic reticulum-associated degradation (ERAD) for misfolded lumenal proteins. Forms homotetramers which encircle a large channel traversing the endoplasmic reticulum (ER) membrane. This allows the retrotranslocation of misfolded proteins from the ER into the cytosol where they are ubiquitinated and degraded by the proteasome. The channel has a lateral gate within the membrane which provides direct access to membrane proteins with no need to reenter the ER lumen first. May mediate the interaction between VCP and the misfolded protein. Also involved in endoplasmic reticulum stress-induced pre-emptive quality control, a mechanism that selectively attenuates the translocation of newly synthesized proteins into the endoplasmic reticulum and reroutes them to the cytosol for proteasomal degradation. By controlling the steady-state expression of the IGF1R receptor, indirectly regulates the insulin-like growth factor receptor signaling pathway. This Pongo abelii (Sumatran orangutan) protein is Derlin-1.